The primary structure comprises 231 residues: Membrane protein YknW (231 aa).

The next 5 helical transmembrane spans lie at 38–58 (VWGPLLIVAAIIIVGAVLQSL), 93–113 (GAIIGGIAALFIAPLIYWLCV), 128–148 (LSLFVSLISSLGLLVNGIVAF), 171–191 (LASVLNTFEIFSIWSFVLLAI), and 205–225 (WISAIILFGILVVFSLFSGLI).

In terms of assembly, interacts with a complex composed of YknX, YknY and YknZ.

The protein localises to the cell membrane. In terms of biological role, part of an unusual four-component transporter, which is required for protection against the killing factor SdpC (sporulation-delaying protein). Has a role in the assembly of the YknXYZ complex. This chain is Membrane protein YknW (yknW), found in Bacillus subtilis (strain 168).